A 237-amino-acid polypeptide reads, in one-letter code: Ribose-5-phosphate isomerase A (237 aa).

Residues 33-36 (TGST), 88-91 (DGAD), and 101-104 (KGRG) contribute to the substrate site. The active-site Proton acceptor is the glutamate 110. Residue lysine 128 participates in substrate binding.

This sequence belongs to the ribose 5-phosphate isomerase family. Homodimer.

The catalysed reaction is aldehydo-D-ribose 5-phosphate = D-ribulose 5-phosphate. The protein operates within carbohydrate degradation; pentose phosphate pathway; D-ribose 5-phosphate from D-ribulose 5-phosphate (non-oxidative stage): step 1/1. Its function is as follows. Catalyzes the reversible conversion of ribose-5-phosphate to ribulose 5-phosphate. The chain is Ribose-5-phosphate isomerase A from Methanoregula boonei (strain DSM 21154 / JCM 14090 / 6A8).